Reading from the N-terminus, the 155-residue chain is uncharacterized protein (155 aa).

The HTH asnC-type domain maps to 4-65 (IDEIDEVIVR…VVDPSFFGEF (62 aa)). The H-T-H motif DNA-binding region spans 23 to 42 (LTELGRKVGLTASAVKNRIE).

This is an uncharacterized protein from Pyrococcus horikoshii (strain ATCC 700860 / DSM 12428 / JCM 9974 / NBRC 100139 / OT-3).